Reading from the N-terminus, the 7705-residue chain is Copine family protein 2 (7705 aa).

9 disordered regions span residues 1 to 61, 269 to 360, 372 to 408, 464 to 492, 506 to 538, 560 to 614, 1301 to 1358, 4381 to 4427, and 6779 to 6800; these read MNDY…RHSE, KEGN…NNSQ, SERK…HQQP, GDRA…TSSV, STEP…TADG, DERA…QGPP, NRSE…DQQV, ELEP…RSES, and RDEH…GKFT. Residues 12–25 are compositionally biased toward low complexity; that stretch reads SSQKSNNQKISNNS. The span at 269-282 shows a compositional bias: basic and acidic residues; it reads KEGNNPSCCRERGT. The segment covering 302–313 has biased composition (low complexity); it reads STSTKVAVTSAS. Basic residues predominate over residues 318-336; sequence IKDHKKQLKKEKEKKKKMD. Residues 372 to 404 are compositionally biased toward basic and acidic residues; that stretch reads SERKTAKQREQELLQRSERRSGGRTHSHEEYRR. Positions 522–532 are enriched in polar residues; sequence ASLSSVQQKQP. Residues 560-587 show a composition bias toward basic and acidic residues; it reads DERAKDFLRGDRSSRLSPQSERKNERQI. Polar residues predominate over residues 588 to 597; sequence QIRQQSSGPT. 2 stretches are compositionally biased toward basic and acidic residues: residues 598–611 and 1301–1335; these read NRRE…EKRQ and NRSE…HTSE. Over residues 4397–4409 the composition is skewed to low complexity; the sequence is RQSRVYRSSSQVR. Composition is skewed to basic and acidic residues over residues 4411-4427 and 6779-6797; these read PSEE…RSES and RDEH…RDGG. The VWFA domain maps to 7475 to 7673; the sequence is NLIFGIDYTK…FHKVMFNAPN (199 aa).

The protein belongs to the copine family. As to expression, expressed in body wall muscle.

The protein is Copine family protein 2 (cpna-2) of Caenorhabditis elegans.